The sequence spans 1584 residues: Cilia- and flagella-associated protein 74 (1584 aa).

A coiled-coil region spans residues 300–379; that stretch reads RKFQAWDRAK…EAEEEKRKKQ (80 aa). Residues 692 to 706 show a composition bias toward polar residues; the sequence is SEQQLEGTESSQADM. A disordered region spans residues 692–739; the sequence is SEQQLEGTESSQADMQSRKELEKLDKEQEEEQPAEPERLTTVIPPSEE. Over residues 707-717 the composition is skewed to basic and acidic residues; the sequence is QSRKELEKLDK.

Belongs to the CFAP74 family.

It localises to the cytoplasm. Its subcellular location is the cytoskeleton. It is found in the cilium axoneme. The protein resides in the flagellum axoneme. In terms of biological role, as part of the central apparatus of the cilium axoneme may play a role in cilium movement. May play an important role in sperm architecture and function. The sequence is that of Cilia- and flagella-associated protein 74 from Homo sapiens (Human).